We begin with the raw amino-acid sequence, 743 residues long: Serine-rich coiled-coil domain-containing protein 1 (743 aa).

Disordered stretches follow at residues 1-125 (MGDS…SRNK) and 156-175 (KSEG…SVKQ). Residues 29–56 (LPSSPSSSNTVGVHSSSPSSTNSSSGST) are compositionally biased toward low complexity. Residues 81-102 (EPTNQNLSISNGAQPGQSSMQK) are compositionally biased toward polar residues. Residues 672–713 (MKDECSMLKLQLKEKDELISQLQEELEKVQHLQKAFASRVDK) are a coiled coil.

This sequence belongs to the CCSER family.

The protein is Serine-rich coiled-coil domain-containing protein 1 (CCSER1) of Bos taurus (Bovine).